The primary structure comprises 115 residues: NAD(P)H-quinone oxidoreductase subunit M (115 aa).

Belongs to the complex I NdhM subunit family. As to quaternary structure, NDH-1 can be composed of about 15 different subunits; different subcomplexes with different compositions have been identified which probably have different functions.

It localises to the cellular thylakoid membrane. It catalyses the reaction a plastoquinone + NADH + (n+1) H(+)(in) = a plastoquinol + NAD(+) + n H(+)(out). The catalysed reaction is a plastoquinone + NADPH + (n+1) H(+)(in) = a plastoquinol + NADP(+) + n H(+)(out). In terms of biological role, NDH-1 shuttles electrons from an unknown electron donor, via FMN and iron-sulfur (Fe-S) centers, to quinones in the respiratory and/or the photosynthetic chain. The immediate electron acceptor for the enzyme in this species is believed to be plastoquinone. Couples the redox reaction to proton translocation, and thus conserves the redox energy in a proton gradient. Cyanobacterial NDH-1 also plays a role in inorganic carbon-concentration. This Prochlorococcus marinus (strain NATL2A) protein is NAD(P)H-quinone oxidoreductase subunit M.